Here is a 340-residue protein sequence, read N- to C-terminus: Protein RecA (340 aa).

65–72 (GPESGGKT) provides a ligand contact to ATP.

Belongs to the RecA family.

The protein localises to the cytoplasm. Functionally, can catalyze the hydrolysis of ATP in the presence of single-stranded DNA, the ATP-dependent uptake of single-stranded DNA by duplex DNA, and the ATP-dependent hybridization of homologous single-stranded DNAs. It interacts with LexA causing its activation and leading to its autocatalytic cleavage. This Thermus thermophilus (strain ATCC BAA-163 / DSM 7039 / HB27) protein is Protein RecA.